Reading from the N-terminus, the 328-residue chain is MAKPAKRVAVTGAAGQIAYSLLFRIANGDLLGKDQPVILQLLDLPQAQAAVKGVVMELDDCAFPLLAGVVITDDPKVAFKDADVALLVGARPRSKGMERKDLLSANAEIFTVQGAALNEVASRDVKVLVVGNPANTNAYIAMKSAPDLPKKNFTAMLRLDHNRALSQLAAKSGKPVASIEKLAVWGNHSPTMYPDFRFATAEGESLLKLINDDVWNRDTFIPTVGKRGAAIIEARGLSSAASAANAAIDHVRDWVLGTNGKWVTMGIPSDGSYGIPEDIIYGVPVTCENGEYKRVEGLEIDAFSREKMDGTLAELLEERDGVAHLLKN.

NAD(+) is bound at residue 12 to 18 (GAAGQIA). Arg-93 and Arg-99 together coordinate substrate. NAD(+) is bound by residues Asn-106, Gln-113, and 130-132 (VGN). The substrate site is built by Asn-132 and Arg-163. Catalysis depends on His-188, which acts as the Proton acceptor.

Belongs to the LDH/MDH superfamily. MDH type 2 family.

It catalyses the reaction (S)-malate + NAD(+) = oxaloacetate + NADH + H(+). In terms of biological role, catalyzes the reversible oxidation of malate to oxaloacetate. In Burkholderia cenocepacia (strain ATCC BAA-245 / DSM 16553 / LMG 16656 / NCTC 13227 / J2315 / CF5610) (Burkholderia cepacia (strain J2315)), this protein is Malate dehydrogenase.